Reading from the N-terminus, the 138-residue chain is MQVSIPVCYPCPSFPQTRPFAGDGRKFGRVDSGFMPKLWEGLSVGAGAAVGACARLALTMQFGEGLWPILAINMLGSFLMGRYRPGPFWGTGVLGGFTTFSAFAVVLVDVPLPHAVAYLTVTVVSCVAAWLMGNRWSA.

The next 4 membrane-spanning stretches (helical) occupy residues 34–54, 60–80, 88–108, and 112–132; these read FMPKLWEGLSVGAGAAVGACA, MQFGEGLWPILAINMLGSFLM, FWGTGVLGGFTTFSAFAVVLV, and LPHAVAYLTVTVVSCVAAWLM. 2 residues coordinate Na(+): Gly-95 and Thr-98.

The protein belongs to the fluoride channel Fluc/FEX (TC 1.A.43) family.

It localises to the cell membrane. It catalyses the reaction fluoride(in) = fluoride(out). Its activity is regulated as follows. Na(+) is not transported, but it plays an essential structural role and its presence is essential for fluoride channel function. Its function is as follows. Fluoride-specific ion channel. Important for reducing fluoride concentration in the cell, thus reducing its toxicity. This is Fluoride-specific ion channel FluC from Corynebacterium efficiens (strain DSM 44549 / YS-314 / AJ 12310 / JCM 11189 / NBRC 100395).